The sequence spans 219 residues: Trafficking protein particle complex subunit 4 (219 aa).

Belongs to the TRAPP small subunits family. TRAPPC4 subfamily. As to quaternary structure, component of the multisubunit TRAPP (transport protein particle) complex, which includes at least TRAPPC2, TRAPPC2L, TRAPPC3, TRAPPC3L, TRAPPC4, TRAPPC5, TRAPPC8, TRAPPC9, TRAPPC10, TRAPPC11 and TRAPPC12. Interacts with SDC2.

Its subcellular location is the postsynaptic cell membrane. The protein resides in the golgi apparatus membrane. It localises to the endoplasmic reticulum. It is found in the vesicle. Core component of the TRAPP complexes which has a function of guanine nucleotide exchange factor activity for Rab1 GTPase. Plays a role in vesicular transport from endoplasmic reticulum to Golgi and autophagy. May play a role in dendrite postsynaptic membrane trafficking. In Homo sapiens (Human), this protein is Trafficking protein particle complex subunit 4.